A 323-amino-acid polypeptide reads, in one-letter code: 4-hydroxythreonine-4-phosphate dehydrogenase (323 aa).

Thr-133 is a binding site for substrate. Residues His-161, His-206, and His-261 each contribute to the a divalent metal cation site. Substrate contacts are provided by Lys-269, Asn-278, and Arg-287.

It belongs to the PdxA family. In terms of assembly, homodimer. The cofactor is Zn(2+). It depends on Mg(2+) as a cofactor. Co(2+) is required as a cofactor.

The protein localises to the cytoplasm. It carries out the reaction 4-(phosphooxy)-L-threonine + NAD(+) = 3-amino-2-oxopropyl phosphate + CO2 + NADH. It functions in the pathway cofactor biosynthesis; pyridoxine 5'-phosphate biosynthesis; pyridoxine 5'-phosphate from D-erythrose 4-phosphate: step 4/5. Its function is as follows. Catalyzes the NAD(P)-dependent oxidation of 4-(phosphooxy)-L-threonine (HTP) into 2-amino-3-oxo-4-(phosphooxy)butyric acid which spontaneously decarboxylates to form 3-amino-2-oxopropyl phosphate (AHAP). The sequence is that of 4-hydroxythreonine-4-phosphate dehydrogenase from Xanthomonas axonopodis pv. citri (strain 306).